A 436-amino-acid polypeptide reads, in one-letter code: Citrate synthase (436 aa).

Catalysis depends on residues H313 and D371.

The protein belongs to the citrate synthase family. As to quaternary structure, homohexamer.

It carries out the reaction oxaloacetate + acetyl-CoA + H2O = citrate + CoA + H(+). The protein operates within carbohydrate metabolism; tricarboxylic acid cycle; isocitrate from oxaloacetate: step 1/2. In Acetobacter aceti, this protein is Citrate synthase (aarA).